We begin with the raw amino-acid sequence, 144 residues long: Large ribosomal subunit protein uL16 (144 aa).

The protein belongs to the universal ribosomal protein uL16 family. As to quaternary structure, part of the 50S ribosomal subunit.

In terms of biological role, binds 23S rRNA and is also seen to make contacts with the A and possibly P site tRNAs. The protein is Large ribosomal subunit protein uL16 of Natranaerobius thermophilus (strain ATCC BAA-1301 / DSM 18059 / JW/NM-WN-LF).